The chain runs to 426 residues: Enolase 1 (426 aa).

A (2R)-2-phosphoglycerate-binding site is contributed by Gln-163. Residue Glu-205 is the Proton donor of the active site. Positions 242, 283, and 310 each coordinate Mg(2+). (2R)-2-phosphoglycerate is bound by residues Lys-335, Arg-364, Ser-365, and Lys-386. Lys-335 (proton acceptor) is an active-site residue.

It belongs to the enolase family. Requires Mg(2+) as cofactor.

It is found in the cytoplasm. It localises to the secreted. The protein resides in the cell surface. The enzyme catalyses (2R)-2-phosphoglycerate = phosphoenolpyruvate + H2O. The protein operates within carbohydrate degradation; glycolysis; pyruvate from D-glyceraldehyde 3-phosphate: step 4/5. Functionally, catalyzes the reversible conversion of 2-phosphoglycerate (2-PG) into phosphoenolpyruvate (PEP). It is essential for the degradation of carbohydrates via glycolysis. This Streptomyces coelicolor (strain ATCC BAA-471 / A3(2) / M145) protein is Enolase 1.